The sequence spans 222 residues: Cytidylate kinase (222 aa).

Residue 10–18 (GTSSSGKSV) participates in ATP binding.

It belongs to the cytidylate kinase family. Type 1 subfamily.

It localises to the cytoplasm. The enzyme catalyses CMP + ATP = CDP + ADP. It catalyses the reaction dCMP + ATP = dCDP + ADP. In Mycoplasma capricolum subsp. capricolum (strain California kid / ATCC 27343 / NCTC 10154), this protein is Cytidylate kinase.